The chain runs to 1090 residues: Telomerase reverse transcriptase (1090 aa).

Positions 184–301 are disordered; sequence GFLLRPPSRK…PLEGGPSWRS (118 aa). Residues 190–204 show a composition bias toward basic residues; the sequence is PSRKHKSFQVGKKTR. Composition is skewed to basic and acidic residues over residues 218–232 and 252–262; these read EESR…EVST and HHEERRQHEAV. Residues 281–294 show a composition bias toward pro residues; the sequence is KPPPETSAAPPPLE. Residues 316 to 321 carry the TFLY; involved in RNA binding motif; it reads TLGFLY. 2 interaction with RNA template regions span residues 371 to 376 and 477 to 503; these read LPLRYF and WKIK…ELAY. The 325-residue stretch at 569-893 folds into the Reverse transcriptase domain; it reads SPAQVASLPK…CLFPWCGLLL (325 aa). Mg(2+) contacts are provided by aspartate 666, aspartate 826, and aspartate 827.

Belongs to the reverse transcriptase family. Telomerase subfamily. Catalytic subunit of the telomerase holoenzyme complex composed minimally of TERT and the telomerase RNA template component (TERC). Expressed at highest levels in gonads and brain, and at lower levels in heart, spleen, kidney, gill, muscle and skin. Detected in embryonic stem cell lines before and after differentiation. Isoform F is expressed in gonads, with higher levels in testis relative to ovary, but is not detected in other tissues. Isoform B is expressed predominantly in testis. Isoform C is up-regulated in embryonic stem cell lines after differentiation.

It is found in the nucleus. The protein resides in the chromosome. The protein localises to the telomere. It carries out the reaction DNA(n) + a 2'-deoxyribonucleoside 5'-triphosphate = DNA(n+1) + diphosphate. Its function is as follows. Telomerase is a ribonucleoprotein enzyme essential for the replication of chromosome termini in most eukaryotes. It elongates telomeres. It is a reverse transcriptase that adds simple sequence repeats to chromosome ends by copying a template sequence within the RNA component of the enzyme. The chain is Telomerase reverse transcriptase from Oryzias latipes (Japanese rice fish).